Here is a 417-residue protein sequence, read N- to C-terminus: 4-hydroxy-3-methylbut-2-en-1-yl diphosphate synthase (flavodoxin) (417 aa).

[4Fe-4S] cluster contacts are provided by cysteine 304, cysteine 307, cysteine 350, and glutamate 357.

This sequence belongs to the IspG family. [4Fe-4S] cluster is required as a cofactor.

It catalyses the reaction (2E)-4-hydroxy-3-methylbut-2-enyl diphosphate + oxidized [flavodoxin] + H2O + 2 H(+) = 2-C-methyl-D-erythritol 2,4-cyclic diphosphate + reduced [flavodoxin]. It functions in the pathway isoprenoid biosynthesis; isopentenyl diphosphate biosynthesis via DXP pathway; isopentenyl diphosphate from 1-deoxy-D-xylulose 5-phosphate: step 5/6. Converts 2C-methyl-D-erythritol 2,4-cyclodiphosphate (ME-2,4cPP) into 1-hydroxy-2-methyl-2-(E)-butenyl 4-diphosphate. This chain is 4-hydroxy-3-methylbut-2-en-1-yl diphosphate synthase (flavodoxin), found in Sinorhizobium medicae (strain WSM419) (Ensifer medicae).